Here is a 199-residue protein sequence, read N- to C-terminus: Superoxide dismutase [Mn/Fe] (199 aa).

4 residues coordinate Fe(3+): His-27, His-81, Asp-161, and His-165. His-27, His-81, Asp-161, and His-165 together coordinate Mn(2+).

This sequence belongs to the iron/manganese superoxide dismutase family. In terms of assembly, homodimer. Mn(2+) is required as a cofactor. The cofactor is Fe(3+).

The catalysed reaction is 2 superoxide + 2 H(+) = H2O2 + O2. Functionally, destroys superoxide anion radicals which are normally produced within the cells and which are toxic to biological systems. Catalyzes the dismutation of superoxide anion radicals into O2 and H2O2 by successive reduction and oxidation of the transition metal ion at the active site. The chain is Superoxide dismutase [Mn/Fe] (sodA) from Staphylococcus epidermidis (strain ATCC 35984 / DSM 28319 / BCRC 17069 / CCUG 31568 / BM 3577 / RP62A).